The primary structure comprises 394 residues: Flavin-dependent monooxygenase, oxygenase subunit HsaA (394 aa).

Residues Trp-84, 118 to 120, 141 to 143, Arg-263, 346 to 347, and 368 to 369 each bind FMN; these read SSY, WSS, AT, and HA.

It belongs to the HpaH/HsaA monooxygenase family. In terms of assembly, homotetramer under anaerobic conditions. HsaAB monooxygenase consists of an oxygenase component HsaA and a reductase component HsaB.

The enzyme catalyses 3-hydroxy-9,10-secoandrosta-1,3,5(10)-triene-9,17-dione + FMNH2 + O2 = 3,4-dihydroxy-9,10-secoandrosta-1,3,5(10)-triene-9,17-dione + FMN + H2O + H(+). The protein operates within lipid metabolism; steroid biosynthesis. In terms of biological role, catalyzes the o-hydroxylation of 3-hydroxy-9,10-secoandrosta-1,3,5(10)-triene-9,17-dione (3-HSA) to 3,4-dihydroxy-9,10-secoandrosta-1,3,5(10)-triene-9,17-dione (3,4-DHSA) in the catabolism of cholesterol. The sequence is that of Flavin-dependent monooxygenase, oxygenase subunit HsaA from Mycobacterium tuberculosis (strain CDC 1551 / Oshkosh).